Reading from the N-terminus, the 299-residue chain is UPF0276 protein ABO_1518 (299 aa).

This sequence belongs to the UPF0276 family.

The protein is UPF0276 protein ABO_1518 of Alcanivorax borkumensis (strain ATCC 700651 / DSM 11573 / NCIMB 13689 / SK2).